A 185-amino-acid chain; its full sequence is Kappa-casein (185 aa).

An N-terminal signal peptide occupies residues 1–20; the sequence is MKSFFLVVNILALTLPFLGA. O-linked (GalNAc...) threonine glycosylation is present at T143. Phosphoserine; alternate is present on S161. O-linked (GalNAc...) serine; alternate glycosylation occurs at S161. A glycan (O-linked (GalNAc...) threonine) is linked at T178. S179 carries the post-translational modification Phosphoserine.

It belongs to the kappa-casein family. In terms of tissue distribution, mammary gland specific. Secreted in milk.

It localises to the secreted. Functionally, kappa-casein stabilizes micelle formation, preventing casein precipitation in milk. The protein is Kappa-casein (CSN3) of Equus caballus (Horse).